Reading from the N-terminus, the 122-residue chain is Diacylglycerol kinase (122 aa).

Arg10 and Tyr17 together coordinate ATP. Residues Arg10, 14 to 19 (AAGYSW), and 23 to 26 (RAAW) each bind substrate. Glu29 serves as a coordination point for ATP. Glu29 provides a ligand contact to a divalent metal cation. Residues 31-35 (AFRQE), 48-51 (WLDV), Arg56, and Glu70 contribute to the substrate site. The chain crosses the membrane as a helical span at residues 35 to 55 (EGVAVLLAVVIACWLDVDAIT). The helical transmembrane segment at 57 to 77 (VLLISSVMLVMIVEILNSAIE) threads the bilayer. Glu70 acts as the Proton acceptor in catalysis. Residues Glu77, 86–88 (EYH), and 95–96 (KD) contribute to the ATP site. A divalent metal cation is bound at residue Glu77. The helical transmembrane segment at 98–118 (GSAAVLIAIIVAVITWCILLW) threads the bilayer. Substrate-binding positions include Ser99 and 113-118 (WCILLW).

It belongs to the bacterial diacylglycerol kinase family. It depends on Mg(2+) as a cofactor.

The protein resides in the cell inner membrane. It catalyses the reaction a 1,2-diacyl-sn-glycerol + ATP = a 1,2-diacyl-sn-glycero-3-phosphate + ADP + H(+). Functionally, catalyzes the ATP-dependent phosphorylation of sn-l,2-diacylglycerol (DAG) to phosphatidic acid. Involved in the recycling of diacylglycerol produced as a by-product during membrane-derived oligosaccharide (MDO) biosynthesis. The protein is Diacylglycerol kinase (dgkA) of Shigella flexneri.